Consider the following 400-residue polypeptide: Acetate kinase (400 aa).

Asn9 is a binding site for Mg(2+). Lys16 lines the ATP pocket. Arg90 contacts substrate. Catalysis depends on Asp147, which acts as the Proton donor/acceptor. Residues 207–211 (HIGNG), 282–284 (DLR), and 330–334 (GIGEN) contribute to the ATP site. Glu385 contacts Mg(2+).

The protein belongs to the acetokinase family. Homodimer. The cofactor is Mg(2+). Mn(2+) serves as cofactor.

It localises to the cytoplasm. It catalyses the reaction acetate + ATP = acetyl phosphate + ADP. It functions in the pathway metabolic intermediate biosynthesis; acetyl-CoA biosynthesis; acetyl-CoA from acetate: step 1/2. Functionally, catalyzes the formation of acetyl phosphate from acetate and ATP. Can also catalyze the reverse reaction. The chain is Acetate kinase from Staphylococcus aureus (strain Mu3 / ATCC 700698).